Consider the following 215-residue polypeptide: Cytochrome b6 (215 aa).

A helical transmembrane segment spans residues 32 to 52 (IFYCLGGITFTLFLVQVATGF). Cysteine 35 is a binding site for heme c. Positions 86 and 100 each coordinate heme b. A run of 3 helical transmembrane segments spans residues 90 to 110 (ASMM…TGGF), 116 to 136 (LTWI…VTGY), and 186 to 206 (LHTF…FLMI). Residues histidine 187 and histidine 202 each contribute to the heme b site.

Belongs to the cytochrome b family. PetB subfamily. The 4 large subunits of the cytochrome b6-f complex are cytochrome b6, subunit IV (17 kDa polypeptide, PetD), cytochrome f and the Rieske protein, while the 4 small subunits are PetG, PetL, PetM and PetN. The complex functions as a dimer. Heme b is required as a cofactor. Requires heme c as cofactor.

The protein localises to the plastid. The protein resides in the chloroplast thylakoid membrane. In terms of biological role, component of the cytochrome b6-f complex, which mediates electron transfer between photosystem II (PSII) and photosystem I (PSI), cyclic electron flow around PSI, and state transitions. The chain is Cytochrome b6 from Tupiella akineta (Green alga).